Reading from the N-terminus, the 109-residue chain is Phosphoribosyl-ATP pyrophosphatase (109 aa).

Belongs to the PRA-PH family.

It is found in the cytoplasm. It carries out the reaction 1-(5-phospho-beta-D-ribosyl)-ATP + H2O = 1-(5-phospho-beta-D-ribosyl)-5'-AMP + diphosphate + H(+). Its pathway is amino-acid biosynthesis; L-histidine biosynthesis; L-histidine from 5-phospho-alpha-D-ribose 1-diphosphate: step 2/9. In Geobacter metallireducens (strain ATCC 53774 / DSM 7210 / GS-15), this protein is Phosphoribosyl-ATP pyrophosphatase.